An 879-amino-acid polypeptide reads, in one-letter code: Phosphoenolpyruvate carboxylase (879 aa).

Residues His138 and Lys545 contribute to the active site.

Belongs to the PEPCase type 1 family. The cofactor is Mg(2+).

It carries out the reaction oxaloacetate + phosphate = phosphoenolpyruvate + hydrogencarbonate. Forms oxaloacetate, a four-carbon dicarboxylic acid source for the tricarboxylic acid cycle. The sequence is that of Phosphoenolpyruvate carboxylase from Histophilus somni (strain 2336) (Haemophilus somnus).